Here is a 348-residue protein sequence, read N- to C-terminus: D-alanine--D-alanine ligase (348 aa).

In terms of domain architecture, ATP-grasp spans 132 to 334; the sequence is KRVLESIGIP…YPDLIEELVT (203 aa). 162-217 contacts ATP; that stretch reads LARLTFPIFVKPANMGSSVGISKAQTKVELRKAIQLALTYDSRVLIEQGVVAREIE. Residues Asp-288, Glu-301, and Asn-303 each coordinate Mg(2+).

Belongs to the D-alanine--D-alanine ligase family. Mg(2+) serves as cofactor. Mn(2+) is required as a cofactor.

It is found in the cytoplasm. The catalysed reaction is 2 D-alanine + ATP = D-alanyl-D-alanine + ADP + phosphate + H(+). Its pathway is cell wall biogenesis; peptidoglycan biosynthesis. Its function is as follows. Cell wall formation. The polypeptide is D-alanine--D-alanine ligase (Streptococcus pyogenes serotype M18 (strain MGAS8232)).